Here is a 114-residue protein sequence, read N- to C-terminus: Fumarate reductase subunit D (114 aa).

A run of 3 helical transmembrane segments spans residues 27–47, 50–70, and 94–114; these read ICFP…LIPM, IIVF…TIFP, and WLFY…VIAL.

It belongs to the FrdD family. In terms of assembly, part of an enzyme complex containing four subunits: a flavoprotein (FrdA), an iron-sulfur protein (FrdB), and two hydrophobic anchor proteins (FrdC and FrdD).

It is found in the cell inner membrane. Anchors the catalytic components of the fumarate reductase complex to the cell membrane, binds quinones. This Haemophilus ducreyi (strain 35000HP / ATCC 700724) protein is Fumarate reductase subunit D.